The sequence spans 213 residues: Large ribosomal subunit protein uL3 (213 aa).

The protein belongs to the universal ribosomal protein uL3 family. Part of the 50S ribosomal subunit. Forms a cluster with proteins L14 and L19.

Functionally, one of the primary rRNA binding proteins, it binds directly near the 3'-end of the 23S rRNA, where it nucleates assembly of the 50S subunit. This is Large ribosomal subunit protein uL3 from Desulforudis audaxviator (strain MP104C).